Consider the following 307-residue polypeptide: Ribosomal RNA small subunit methyltransferase H (307 aa).

Residues 34-36 (GGH), D54, F79, D101, and Q108 each bind S-adenosyl-L-methionine.

Belongs to the methyltransferase superfamily. RsmH family.

It is found in the cytoplasm. It carries out the reaction cytidine(1402) in 16S rRNA + S-adenosyl-L-methionine = N(4)-methylcytidine(1402) in 16S rRNA + S-adenosyl-L-homocysteine + H(+). Its function is as follows. Specifically methylates the N4 position of cytidine in position 1402 (C1402) of 16S rRNA. This is Ribosomal RNA small subunit methyltransferase H from Vesicomyosocius okutanii subsp. Calyptogena okutanii (strain HA).